Consider the following 176-residue polypeptide: CDP-archaeol synthase (176 aa).

5 helical membrane-spanning segments follow: residues 12–32, 60–80, 85–105, 118–138, and 141–161; these read FIYWFLKYYLSPMIANASPVL, GFYVGVLMGFLTSIGIGIILC, ILIGLGSSIFALIGDLLGSFI, PIIDQLDFALMATLYYYFLGI, and FISYPLYILYSLIIILALHII.

It belongs to the CDP-archaeol synthase family. Mg(2+) is required as a cofactor.

Its subcellular location is the cell membrane. It carries out the reaction 2,3-bis-O-(geranylgeranyl)-sn-glycerol 1-phosphate + CTP + H(+) = CDP-2,3-bis-O-(geranylgeranyl)-sn-glycerol + diphosphate. Its pathway is membrane lipid metabolism; glycerophospholipid metabolism. Its function is as follows. Catalyzes the formation of CDP-2,3-bis-(O-geranylgeranyl)-sn-glycerol (CDP-archaeol) from 2,3-bis-(O-geranylgeranyl)-sn-glycerol 1-phosphate (DGGGP) and CTP. This reaction is the third ether-bond-formation step in the biosynthesis of archaeal membrane lipids. This chain is CDP-archaeol synthase, found in Staphylothermus marinus (strain ATCC 43588 / DSM 3639 / JCM 9404 / F1).